A 553-amino-acid chain; its full sequence is Putative transport protein YidE (553 aa).

The next 5 membrane-spanning stretches (helical) occupy residues 4–24, 28–48, 65–85, 95–115, and 158–178; these read IALT…IGNV, GVGL…HFVS, FGLI…FFAS, LFAV…HKLF, and MSYA…MWML. RCK C-terminal domains follow at residues 191–276 and 279–361; these read QQHE…VIGQ and DTSL…VLGN. 6 consecutive transmembrane segments (helical) span residues 371–391, 393–413, 439–459, 464–484, 493–513, and 533–553; these read MLPV…PVFV, GFPA…ALIL, IVLF…HTLV, LSWI…VGIL, YLTM…LAFA, and LVMF…WSIG.

This sequence belongs to the AAE transporter (TC 2.A.81) family. YidE subfamily.

The protein localises to the cell membrane. The chain is Putative transport protein YidE from Escherichia coli O6:K15:H31 (strain 536 / UPEC).